Consider the following 65-residue polypeptide: Large ribosomal subunit protein bL35 (65 aa).

The span at 1-15 (MPKMKTKKSASKRFT) shows a compositional bias: basic residues. 2 disordered regions span residues 1–26 (MPKM…KRGQ) and 38–65 (TKNK…MPYA). Over residues 45–54 (RGTEGVHETN) the composition is skewed to basic and acidic residues.

Belongs to the bacterial ribosomal protein bL35 family.

The polypeptide is Large ribosomal subunit protein bL35 (Ralstonia pickettii (strain 12J)).